A 475-amino-acid polypeptide reads, in one-letter code: Pyruvate kinase (475 aa).

R33 provides a ligand contact to substrate. K(+)-binding residues include N35, S37, and D67. 35 to 38 contacts ATP; the sequence is NFSH. Residues R74 and K155 each contribute to the ATP site. E220 lines the Mg(2+) pocket. Residues G243, D244, and T276 each contribute to the substrate site. D244 serves as a coordination point for Mg(2+).

Belongs to the pyruvate kinase family. As to quaternary structure, homotetramer. Mg(2+) is required as a cofactor. Requires K(+) as cofactor.

It catalyses the reaction pyruvate + ATP = phosphoenolpyruvate + ADP + H(+). The protein operates within carbohydrate degradation; glycolysis; pyruvate from D-glyceraldehyde 3-phosphate: step 5/5. The polypeptide is Pyruvate kinase (pyk) (Corynebacterium glutamicum (strain ATCC 13032 / DSM 20300 / JCM 1318 / BCRC 11384 / CCUG 27702 / LMG 3730 / NBRC 12168 / NCIMB 10025 / NRRL B-2784 / 534)).